The primary structure comprises 443 residues: MERVNVVGAGLAGSEAAWTLLRLGVPVRLFEMRPKRMTPAHGTDRFAEIVCSNSLGGEGETNAKGLLQAEMRRAGSLVMEAADLARVPAGGALAVDREEFSGYITERLTGHPLLEVVREEVREIPPGITVLATGPLTSEALAEALKRRFGDHFLAYYDAASPIVLYESIDLTKCFRAGRYGQSADYLNCPMTEEEYRRFHQALLEAQRHTPHDWEKLEFFEACVPVEELARRGYQTLLFGPMKPVGLVDPRTGKEPFAVVQLRQEDKAGRMWSLVGFQTGLKWPEQKRLIQMIPGLENAEIVRYGVMHRNTYLNAPRLLGETLEFREAEGLYAAGVLAGVEGYLESAATGFLAGLNAARKALGLPPVAPPEESMLGGLVRYLATANPEGFQPMYANWGLVPPVEGRMGKKEKRQAMYRRGLEAFSAWLSGLNPPLPRPEAALV.

An FAD-binding site is contributed by 8-13 (GAGLAG).

It belongs to the MnmG family. TrmFO subfamily. Requires FAD as cofactor.

Its subcellular location is the cytoplasm. It catalyses the reaction uridine(54) in tRNA + (6R)-5,10-methylene-5,6,7,8-tetrahydrofolate + NADH + H(+) = 5-methyluridine(54) in tRNA + (6S)-5,6,7,8-tetrahydrofolate + NAD(+). It carries out the reaction uridine(54) in tRNA + (6R)-5,10-methylene-5,6,7,8-tetrahydrofolate + NADPH + H(+) = 5-methyluridine(54) in tRNA + (6S)-5,6,7,8-tetrahydrofolate + NADP(+). Its function is as follows. Catalyzes the folate-dependent formation of 5-methyl-uridine at position 54 (M-5-U54) in all tRNAs. This Thermus thermophilus (strain ATCC 27634 / DSM 579 / HB8) protein is Methylenetetrahydrofolate--tRNA-(uracil-5-)-methyltransferase TrmFO.